A 419-amino-acid chain; its full sequence is Gamma-glutamyl phosphate reductase (419 aa).

It belongs to the gamma-glutamyl phosphate reductase family.

The protein localises to the cytoplasm. The enzyme catalyses L-glutamate 5-semialdehyde + phosphate + NADP(+) = L-glutamyl 5-phosphate + NADPH + H(+). The protein operates within amino-acid biosynthesis; L-proline biosynthesis; L-glutamate 5-semialdehyde from L-glutamate: step 2/2. Functionally, catalyzes the NADPH-dependent reduction of L-glutamate 5-phosphate into L-glutamate 5-semialdehyde and phosphate. The product spontaneously undergoes cyclization to form 1-pyrroline-5-carboxylate. The sequence is that of Gamma-glutamyl phosphate reductase from Yersinia pseudotuberculosis serotype O:1b (strain IP 31758).